A 95-amino-acid chain; its full sequence is MENKNLHIIAACGNGMGTSMLIKIKVEKIMKELGYTAKVEALSMGQTKGMEHSADIIISSIHLTSEFNPNAKAKIVGVLNLMDENEIKQALSKVL.

The PTS EIIB type-2 domain maps to 1–95 (MENKNLHIIA…EIKQALSKVL (95 aa)). Catalysis depends on Cys-12, which acts as the Phosphocysteine intermediate. At Cys-12 the chain carries Phosphocysteine.

The protein resides in the cytoplasm. It carries out the reaction N(pros)-phospho-L-histidyl-[protein] + L-ascorbate(out) = L-ascorbate 6-phosphate(in) + L-histidyl-[protein]. In terms of biological role, the phosphoenolpyruvate-dependent sugar phosphotransferase system (sugar PTS), a major carbohydrate active transport system, catalyzes the phosphorylation of incoming sugar substrates concomitantly with their translocation across the cell membrane. The enzyme II UlaABC PTS system is involved in ascorbate transport. This Mycoplasma pneumoniae (strain ATCC 29342 / M129 / Subtype 1) (Mycoplasmoides pneumoniae) protein is Ascorbate-specific PTS system EIIB component (ulaB).